Reading from the N-terminus, the 430-residue chain is Asparagine--tRNA ligase (430 aa).

The protein belongs to the class-II aminoacyl-tRNA synthetase family. In terms of assembly, homodimer.

The protein localises to the cytoplasm. It catalyses the reaction tRNA(Asn) + L-asparagine + ATP = L-asparaginyl-tRNA(Asn) + AMP + diphosphate + H(+). The sequence is that of Asparagine--tRNA ligase from Staphylococcus aureus (strain MSSA476).